Reading from the N-terminus, the 436-residue chain is Trigger factor (436 aa).

In terms of domain architecture, PPIase FKBP-type spans 161–246; it reads GMRVTMDFVG…LNKVEEQILP (86 aa).

The protein belongs to the FKBP-type PPIase family. Tig subfamily.

Its subcellular location is the cytoplasm. The enzyme catalyses [protein]-peptidylproline (omega=180) = [protein]-peptidylproline (omega=0). Functionally, involved in protein export. Acts as a chaperone by maintaining the newly synthesized protein in an open conformation. Functions as a peptidyl-prolyl cis-trans isomerase. This Aeromonas hydrophila subsp. hydrophila (strain ATCC 7966 / DSM 30187 / BCRC 13018 / CCUG 14551 / JCM 1027 / KCTC 2358 / NCIMB 9240 / NCTC 8049) protein is Trigger factor.